Here is a 447-residue protein sequence, read N- to C-terminus: Exodeoxyribonuclease 7 large subunit (447 aa).

This sequence belongs to the XseA family. Heterooligomer composed of large and small subunits.

It is found in the cytoplasm. The enzyme catalyses Exonucleolytic cleavage in either 5'- to 3'- or 3'- to 5'-direction to yield nucleoside 5'-phosphates.. Its function is as follows. Bidirectionally degrades single-stranded DNA into large acid-insoluble oligonucleotides, which are then degraded further into small acid-soluble oligonucleotides. The protein is Exodeoxyribonuclease 7 large subunit of Thioalkalivibrio sulfidiphilus (strain HL-EbGR7).